The sequence spans 67 residues: Small ribosomal subunit protein eS31 (67 aa).

4 residues coordinate Zn(2+): Cys31, Cys34, Cys49, and Cys52. The segment at 31 to 52 adopts a C4-type zinc-finger fold; it reads CPKCGAGVFMAEHLNRFACGKC.

This sequence belongs to the eukaryotic ribosomal protein eS31 family. As to quaternary structure, part of the 30S ribosomal subunit. Zn(2+) serves as cofactor.

This chain is Small ribosomal subunit protein eS31, found in Methanococcus maripaludis (strain DSM 14266 / JCM 13030 / NBRC 101832 / S2 / LL).